Here is a 313-residue protein sequence, read N- to C-terminus: HPr kinase/phosphorylase (313 aa).

Residues His-140 and Lys-161 contribute to the active site. 155-162 (GDSGVGKS) contacts ATP. Residue Ser-162 coordinates Mg(2+). Asp-179 (proton acceptor; for phosphorylation activity. Proton donor; for dephosphorylation activity) is an active-site residue. The segment at 203-212 (LEIRGIGIID) is important for the catalytic mechanism of both phosphorylation and dephosphorylation. Glu-204 contributes to the Mg(2+) binding site. Arg-245 is an active-site residue. The important for the catalytic mechanism of dephosphorylation stretch occupies residues 266–271 (PVKVGR).

The protein belongs to the HPrK/P family. Homohexamer. Requires Mg(2+) as cofactor.

The enzyme catalyses [HPr protein]-L-serine + ATP = [HPr protein]-O-phospho-L-serine + ADP + H(+). The catalysed reaction is [HPr protein]-O-phospho-L-serine + phosphate + H(+) = [HPr protein]-L-serine + diphosphate. Catalyzes the ATP- as well as the pyrophosphate-dependent phosphorylation of a specific serine residue in HPr, a phosphocarrier protein of the phosphoenolpyruvate-dependent sugar phosphotransferase system (PTS). HprK/P also catalyzes the pyrophosphate-producing, inorganic phosphate-dependent dephosphorylation (phosphorolysis) of seryl-phosphorylated HPr (P-Ser-HPr). The two antagonistic activities of HprK/P are regulated by several intracellular metabolites, which change their concentration in response to the absence or presence of rapidly metabolisable carbon sources (glucose, fructose, etc.) in the growth medium. Therefore, by controlling the phosphorylation state of HPr, HPrK/P is a sensor enzyme that plays a major role in the regulation of carbon metabolism and sugar transport: it mediates carbon catabolite repression (CCR), and regulates PTS-catalyzed carbohydrate uptake and inducer exclusion. The chain is HPr kinase/phosphorylase from Latilactobacillus sakei subsp. sakei (strain 23K) (Lactobacillus sakei subsp. sakei).